The sequence spans 569 residues: MLO-like protein 10 (569 aa).

Topologically, residues 1-41 are extracellular; sequence MATRCFWCWTTLLFCSQLLTGFARASSAGGAKEKGLSQTPT. The chain crosses the membrane as a helical span at residues 42–62; that stretch reads WAVALVCTFFILVSVLLEKAL. Topologically, residues 63–85 are cytoplasmic; the sequence is HRVATWLWEKHKNSLLEALEKIK. The helical transmembrane segment at 86–106 threads the bilayer; the sequence is AELMILGFISLLLTFGEQYIL. The Extracellular portion of the chain corresponds to 107 to 163; sequence KICIPEKAAASMLPCPAPSTHDQDKTHRRRLAAATTSSRCDEGHEPLIPATGLHQLH. The helical transmembrane segment at 164–184 threads the bilayer; it reads ILLFFMAAFHILYSFITMMLG. Topologically, residues 185–286 are cytoplasmic; it reads RLKIRGWKKW…IKRSLEDDFK (102 aa). A helical transmembrane segment spans residues 287 to 307; that stretch reads VVVGISPLLWASFVIFLLLNV. Position 308 (Asn308) is a topological domain, extracellular. The helical transmembrane segment at 309–329 threads the bilayer; that stretch reads GWEALFWASILPVLIILAVST. At 330–372 the chain is on the cytoplasmic side; sequence KLQAILTRMALGITERHAVVQGIPLVHGSDKYFWFNRPQLLLH. The helical transmembrane segment at 373-393 threads the bilayer; it reads LLHFALFQNAFQLTYFFWVWY. The Extracellular segment spans residues 394–413; it reads SFGLKSCFHTDFKLVIVKLS. A helical transmembrane segment spans residues 414–434; the sequence is LGVGALILCSYITLPLYALVT. The Cytoplasmic segment spans residues 435 to 569; it reads QMGSNMKKAV…VKNVPANDID (135 aa). Residues 447-468 form a calmodulin-binding region; the sequence is EQMAKALKKWHMTVKKKKGKAR.

Belongs to the MLO family.

The protein resides in the membrane. May be involved in modulation of pathogen defense and leaf cell death. Activity seems to be regulated by Ca(2+)-dependent calmodulin binding and seems not to require heterotrimeric G proteins. The protein is MLO-like protein 10 (MLO10) of Arabidopsis thaliana (Mouse-ear cress).